The chain runs to 709 residues: Probable lanosterol 14-alpha demethylase (709 aa).

Cysteine 425 is a binding site for heme.

This sequence belongs to the cytochrome P450 family. Heme is required as a cofactor.

It localises to the membrane. The enzyme catalyses a 14alpha-methyl steroid + 3 reduced [NADPH--hemoprotein reductase] + 3 O2 = a Delta(14) steroid + formate + 3 oxidized [NADPH--hemoprotein reductase] + 4 H2O + 4 H(+). The protein operates within steroid biosynthesis; zymosterol biosynthesis; zymosterol from lanosterol: step 1/6. In terms of biological role, catalyzes the 14-alpha demethylation of obtusifoliol to 4 alpha-methyl-5 alpha-ergosta-8,14,24(28)-trien-3 beta-ol. The protein is Probable lanosterol 14-alpha demethylase of Acanthamoeba polyphaga (Amoeba).